We begin with the raw amino-acid sequence, 741 residues long: Protein O-mannosyl-transferase TMTC4 (741 aa).

Over 1–14 (MAVLDTDLDHILPS) the chain is Cytoplasmic. Residues 15–35 (SVLPPFWAKLVVGSVAIVCFA) form a helical membrane-spanning segment. At 36–111 (RSYDGDFVFD…FHPVGFHVVN (76 aa)) the chain is on the extracellular side. N-linked (GlcNAc...) asparagine glycosylation is present at Asn-78. Residues 112–132 (ILLHSGISVLMVDVFSVLFGG) form a helical membrane-spanning segment. Over 133-141 (LQYTSKGRR) the chain is Cytoplasmic. Residues 142–162 (LHLAPRASLLAALLFAVHPVH) traverse the membrane as a helical segment. At 163–165 (TEC) the chain is on the extracellular side. Residues 166 to 186 (VAGVVGRADLLCALFFLLSFL) traverse the membrane as a helical segment. At 187–198 (GYCKAFRESNKE) the chain is on the cytoplasmic side. The chain crosses the membrane as a helical span at residues 199–219 (GAHSSTFWVLLSIFLGAVAML). The Extracellular portion of the chain corresponds to 220-224 (CKEQG). A helical membrane pass occupies residues 225–245 (ITVLGLNAVFDILVIGKFNVL). At 246-268 (EIVQKVLHKDKSLENLGMLRNGG) the chain is on the cytoplasmic side. The helical transmembrane segment at 269–288 (LLFRMTLLTSGGAGMLYVRW) threads the bilayer. Topologically, residues 289–354 (RIMGTGPPAF…PLIKSISDWR (66 aa)) are extracellular. The chain crosses the membrane as a helical span at residues 355–375 (VIALAALWFCLIGLICQALCS). The Cytoplasmic portion of the chain corresponds to 376–382 (EDGHKRR). A helical transmembrane segment spans residues 383 to 403 (ILTLGLGFLVIPFLPASNLFF). Over 404–412 (RVGFVVAER) the chain is Extracellular. A helical transmembrane segment spans residues 413–433 (VLYLPSVGYCVLLTFGFGALS). Residues 434-440 (KHTKKKK) lie on the Cytoplasmic side of the membrane. Residues 441–461 (LIAAVVLGILFINTLRCVLRS) form a helical membrane-spanning segment. Over 462–741 (GEWRSEEQLF…KLELMQKKAV (280 aa)) the chain is Extracellular. TPR repeat units lie at residues 482-515 (AKVH…NPKY), 516-549 (VHAM…QPDF), 550-583 (AAAW…RRKY), 584-617 (PDCY…KPEH), 618-651 (SLAW…IPND), 652-685 (HSLM…NPNA), and 686-719 (ASYH…DPTA). N-linked (GlcNAc...) asparagine glycosylation is present at Asn-497. N-linked (GlcNAc...) asparagine glycosylation is present at Asn-609.

Belongs to the TMTC family.

It is found in the membrane. It localises to the endoplasmic reticulum. It carries out the reaction a di-trans,poly-cis-dolichyl beta-D-mannosyl phosphate + L-seryl-[protein] = 3-O-(alpha-D-mannosyl)-L-seryl-[protein] + a di-trans,poly-cis-dolichyl phosphate + H(+). The enzyme catalyses a di-trans,poly-cis-dolichyl beta-D-mannosyl phosphate + L-threonyl-[protein] = 3-O-(alpha-D-mannosyl)-L-threonyl-[protein] + a di-trans,poly-cis-dolichyl phosphate + H(+). Its pathway is protein modification; protein glycosylation. Its function is as follows. Transfers mannosyl residues to the hydroxyl group of serine or threonine residues. The 4 members of the TMTC family are O-mannosyl-transferases dedicated primarily to the cadherin superfamily, each member seems to have a distinct role in decorating the cadherin domains with O-linked mannose glycans at specific regions. Also acts as O-mannosyl-transferase on other proteins such as PDIA3. The protein is Protein O-mannosyl-transferase TMTC4 of Homo sapiens (Human).